Reading from the N-terminus, the 291-residue chain is Glycine--tRNA ligase alpha subunit (291 aa).

The protein belongs to the class-II aminoacyl-tRNA synthetase family. As to quaternary structure, tetramer of two alpha and two beta subunits.

It localises to the cytoplasm. It catalyses the reaction tRNA(Gly) + glycine + ATP = glycyl-tRNA(Gly) + AMP + diphosphate. In Microcystis aeruginosa (strain NIES-843 / IAM M-2473), this protein is Glycine--tRNA ligase alpha subunit.